The primary structure comprises 339 residues: Glycerol-3-phosphate dehydrogenase [NAD(P)+] (339 aa).

Residues Ser-11, Trp-12, and Lys-109 each coordinate NADPH. 3 residues coordinate sn-glycerol 3-phosphate: Lys-109, Gly-140, and Ser-142. Ala-144 is an NADPH binding site. Residues Lys-195, Asp-249, Ser-259, Arg-260, and Asn-261 each coordinate sn-glycerol 3-phosphate. The Proton acceptor role is filled by Lys-195. Position 260 (Arg-260) interacts with NADPH. NADPH-binding residues include Val-284 and Glu-286.

The protein belongs to the NAD-dependent glycerol-3-phosphate dehydrogenase family.

Its subcellular location is the cytoplasm. The enzyme catalyses sn-glycerol 3-phosphate + NAD(+) = dihydroxyacetone phosphate + NADH + H(+). It catalyses the reaction sn-glycerol 3-phosphate + NADP(+) = dihydroxyacetone phosphate + NADPH + H(+). Its pathway is membrane lipid metabolism; glycerophospholipid metabolism. Functionally, catalyzes the reduction of the glycolytic intermediate dihydroxyacetone phosphate (DHAP) to sn-glycerol 3-phosphate (G3P), the key precursor for phospholipid synthesis. This is Glycerol-3-phosphate dehydrogenase [NAD(P)+] from Lactobacillus acidophilus (strain ATCC 700396 / NCK56 / N2 / NCFM).